We begin with the raw amino-acid sequence, 941 residues long: MYQGEFGLNMKLGYGKFSWPTGESYHGQFYRDHCHGLGTYMWPDGSSFTGTFYLSHREGYGTMYMKTRLFQGLYKADQRFGPGVETYPDGSQDVGLWFREQLIKLCTQIPSGFSLLRYPEFSSFITHSPARISLSEEEKTEWGLQEGQDPFFYDYKRFLLNDNLTLPPEMYVYSTNSDHLPMTSSFRKELDARIFLNEIPPFVEDGEPWFIINETPLLVKIQKQTYKFRNKPAHTSWNMGAILEGKRSGFAPCGPKEQLSMEMILKAEEGNHEWICRILKDNFASADVADAKGYTVLAAAATHCHNDIVNLLLDCGADVNKCSDEGLTALSMCFLLHYPAQSFKPNVAERTIPEPQEPPKFPVVPILSSSFMDTNLESLYYEVNVPSQGSYELRPPPAPLLLPRVSGSHEGGHFQDTGQCGGSIDHRSSSLKGDSPLVKGSLGHVESGLEDVLGNTDRGSLCSAETKFESNVCVCDFSIELSQAMLERSAQSHSLLKMASPSPCTSSFDKGTMRRMALSMIERRKRWRTIKLLLRRGADPNLCCVPMQVLFLAVKAGDVDGVRLLLEHGARTDICFPPQLSTLTPLHIAAALPGEEGVQIVELLLHAITDVDAKASDEDDTYKPGKLDLLPSSLKLSNEPGPPQAYYSTDTALPEEGGRTALHMACEREDDNKCARDIVRLLLSHGANPNLLWSGHSPLSLSIASGNELVVKELLTQGADPNLPLTKGLGSALCVACDLTYEHQRNMDSKLALIDRLISHGADILKPVMLRQGEKEAVGTAVDYGYFRFFQDRRIARCPFHTLMPAERETFLARKRLLEYMGLQLRQAVFAKESQWDPTWLYLCKRAELIPSHRMKKKGPSLPRGLDVKEQGQIPFFKFCYQCGRSIGVRLLPCPRCYGILTCSKYCKTKAWTEFHKKDCGDLVAIVTQLEQVSRRREEFQ.

MORN repeat units lie at residues 2-24, 25-47, and 70-92; these read YQGE…TGES, YHGQ…DGSS, and FQGL…DGSQ. ANK repeat units lie at residues 292–321, 513–542, 545–574, 581–613, 657–691, 694–723, and 737–766; these read KGYT…DVNK, MRRM…DPNL, VPMQ…RTDI, STLT…DVDA, GGRT…NPNL, SGHS…DPNL, and CDLT…DILK. Positions 880, 883, 894, 897, 903, 907, 916, and 920 each coordinate Zn(2+). The MYND-type zinc-finger motif lies at 880-920; it reads CYQCGRSIGVRLLPCPRCYGILTCSKYCKTKAWTEFHKKDC.

This is Ankyrin repeat and MYND domain-containing protein 1 (ANKMY1) from Homo sapiens (Human).